The following is a 50-amino-acid chain: Large ribosomal subunit protein bL33B (50 aa).

This sequence belongs to the bacterial ribosomal protein bL33 family.

This chain is Large ribosomal subunit protein bL33B (rpmG2), found in Enterococcus faecalis (strain ATCC 700802 / V583).